The following is a 339-amino-acid chain: Ketol-acid reductoisomerase (NADP(+)) (339 aa).

In terms of domain architecture, KARI N-terminal Rossmann spans methionine 1–threonine 182. Residues tyrosine 24–glutamine 27, arginine 48, serine 51, threonine 53, and aspartate 83–glutamine 86 each bind NADP(+). Histidine 108 is a catalytic residue. Glycine 134 is an NADP(+) binding site. Residues serine 183–isoleucine 328 form the KARI C-terminal knotted domain. Residues aspartate 191, glutamate 195, glutamate 227, and glutamate 231 each coordinate Mg(2+). A substrate-binding site is contributed by serine 252.

Belongs to the ketol-acid reductoisomerase family. It depends on Mg(2+) as a cofactor.

The enzyme catalyses (2R)-2,3-dihydroxy-3-methylbutanoate + NADP(+) = (2S)-2-acetolactate + NADPH + H(+). It catalyses the reaction (2R,3R)-2,3-dihydroxy-3-methylpentanoate + NADP(+) = (S)-2-ethyl-2-hydroxy-3-oxobutanoate + NADPH + H(+). Its pathway is amino-acid biosynthesis; L-isoleucine biosynthesis; L-isoleucine from 2-oxobutanoate: step 2/4. It participates in amino-acid biosynthesis; L-valine biosynthesis; L-valine from pyruvate: step 2/4. Involved in the biosynthesis of branched-chain amino acids (BCAA). Catalyzes an alkyl-migration followed by a ketol-acid reduction of (S)-2-acetolactate (S2AL) to yield (R)-2,3-dihydroxy-isovalerate. In the isomerase reaction, S2AL is rearranged via a Mg-dependent methyl migration to produce 3-hydroxy-3-methyl-2-ketobutyrate (HMKB). In the reductase reaction, this 2-ketoacid undergoes a metal-dependent reduction by NADPH to yield (R)-2,3-dihydroxy-isovalerate. This chain is Ketol-acid reductoisomerase (NADP(+)), found in Rhodopseudomonas palustris (strain HaA2).